The primary structure comprises 230 residues: D-glycero-alpha-D-manno-heptose 1-phosphate guanylyltransferase (230 aa).

Belongs to the D-alpha-D-heptose-1-P guanylyltransferase family.

It catalyses the reaction D-glycero-alpha-D-manno-heptose 1-phosphate + GTP + H(+) = GDP-D-glycero-alpha-D-manno-heptose + diphosphate. It participates in nucleotide-sugar biosynthesis; GDP-D-glycero-alpha-D-manno-heptose biosynthesis; GDP-D-glycero-alpha-D-manno-heptose from D-glycero-alpha-D-manno-heptose 7-phosphate: step 3/3. The protein operates within cell surface structure biogenesis; S-layer biogenesis. Its function is as follows. Catalyzes the GDP transfer from GTP to D-glycero-alpha-D-manno-heptose 1-phosphate, yielding GDP-D-alpha-D-heptose. Cannot use ATP, CTP, dTTP or UTP as substrate. In Aneurinibacillus thermoaerophilus, this protein is D-glycero-alpha-D-manno-heptose 1-phosphate guanylyltransferase (hddC).